Consider the following 521-residue polypeptide: 2,3-bisphosphoglycerate-independent phosphoglycerate mutase (521 aa).

Mn(2+)-binding residues include Asp-18 and Ser-68. The active-site Phosphoserine intermediate is Ser-68. Substrate contacts are provided by residues His-129, 158–159, Arg-190, Arg-196, 266–269, and Lys-343; these read RD and RSDR. Asp-410, His-414, Asp-451, His-452, and His-470 together coordinate Mn(2+).

The protein belongs to the BPG-independent phosphoglycerate mutase family. Monomer. It depends on Mn(2+) as a cofactor.

It catalyses the reaction (2R)-2-phosphoglycerate = (2R)-3-phosphoglycerate. It functions in the pathway carbohydrate degradation; glycolysis; pyruvate from D-glyceraldehyde 3-phosphate: step 3/5. Functionally, catalyzes the interconversion of 2-phosphoglycerate and 3-phosphoglycerate. The protein is 2,3-bisphosphoglycerate-independent phosphoglycerate mutase of Hydrogenovibrio crunogenus (strain DSM 25203 / XCL-2) (Thiomicrospira crunogena).